Consider the following 921-residue polypeptide: Isoleucine--tRNA ligase 1 (921 aa).

A 'HIGH' region motif is present at residues 57–67 (PYANGDIHMGH). E552 lines the L-isoleucyl-5'-AMP pocket. The 'KMSKS' region signature appears at 593–597 (KMSKS). K596 contacts ATP. The Zn(2+) site is built by C888, C891, C908, and C911.

This sequence belongs to the class-I aminoacyl-tRNA synthetase family. IleS type 1 subfamily. As to quaternary structure, monomer. It depends on Zn(2+) as a cofactor.

Its subcellular location is the cytoplasm. The enzyme catalyses tRNA(Ile) + L-isoleucine + ATP = L-isoleucyl-tRNA(Ile) + AMP + diphosphate. Its function is as follows. Catalyzes the attachment of isoleucine to tRNA(Ile). As IleRS can inadvertently accommodate and process structurally similar amino acids such as valine, to avoid such errors it has two additional distinct tRNA(Ile)-dependent editing activities. One activity is designated as 'pretransfer' editing and involves the hydrolysis of activated Val-AMP. The other activity is designated 'posttransfer' editing and involves deacylation of mischarged Val-tRNA(Ile). This is Isoleucine--tRNA ligase 1 from Bacillus cereus (strain ATCC 10987 / NRS 248).